Reading from the N-terminus, the 446-residue chain is tRNA-2-methylthio-N(6)-dimethylallyladenosine synthase (446 aa).

Positions 3–124 (KKLYIKTYGC…LPELISKVVR (122 aa)) constitute an MTTase N-terminal domain. Residues Cys-12, Cys-48, Cys-87, Cys-162, Cys-166, and Cys-169 each contribute to the [4Fe-4S] cluster site. A Radical SAM core domain is found at 148-380 (YPQGASSFIS…QKELAAQQLA (233 aa)). One can recognise a TRAM domain in the interval 383–446 (ESCIGSTMKV…LNSLSGEIYR (64 aa)).

Belongs to the methylthiotransferase family. MiaB subfamily. As to quaternary structure, monomer. The cofactor is [4Fe-4S] cluster.

The protein localises to the cytoplasm. It catalyses the reaction N(6)-dimethylallyladenosine(37) in tRNA + (sulfur carrier)-SH + AH2 + 2 S-adenosyl-L-methionine = 2-methylsulfanyl-N(6)-dimethylallyladenosine(37) in tRNA + (sulfur carrier)-H + 5'-deoxyadenosine + L-methionine + A + S-adenosyl-L-homocysteine + 2 H(+). Its function is as follows. Catalyzes the methylthiolation of N6-(dimethylallyl)adenosine (i(6)A), leading to the formation of 2-methylthio-N6-(dimethylallyl)adenosine (ms(2)i(6)A) at position 37 in tRNAs that read codons beginning with uridine. This Rickettsia bellii (strain OSU 85-389) protein is tRNA-2-methylthio-N(6)-dimethylallyladenosine synthase.